The primary structure comprises 347 residues: uncharacterized protein (347 aa).

The signal sequence occupies residues 1 to 26 (MQGRVAGSCAPLGLLLVCLHLPGLFA). Over residues 41–60 (GTNLPQLGQPSSTGPSNSEH) the composition is skewed to polar residues. 2 disordered regions span residues 41-110 (GTNL…MDSW) and 148-189 (SGPL…AGGK). A compositionally biased stretch (low complexity) spans 148–157 (SGPLPGESSP).

As to quaternary structure, binds to numerous extracellular matrix proteins.

It is found in the secreted. Its subcellular location is the extracellular space. It localises to the extracellular matrix. This is an uncharacterized protein from Pan troglodytes (Chimpanzee).